We begin with the raw amino-acid sequence, 157 residues long: Protein SINE4 (157 aa).

Residues 104-157 (VTSSSDTTKAKKKTTIRRFVSVTMVLLLSWVLVVLMNHFDHLSMNTQIITLVPT) enclose the KASH domain. A helical transmembrane segment spans residues 122–142 (FVSVTMVLLLSWVLVVLMNHF). The Required for nuclear localization signature appears at 154 to 157 (LVPT).

As to quaternary structure, interacts with SUN1 and SUN2.

It is found in the nucleus membrane. In Arabidopsis thaliana (Mouse-ear cress), this protein is Protein SINE4.